A 105-amino-acid polypeptide reads, in one-letter code: Nucleoid-associated protein SE_2306 (105 aa).

Residues 1-40 (MRGGGNMQQMMKQMQKMQKKMAQEQEKLKEERVAGTAGGG) form a disordered region. Residues 7–16 (MQQMMKQMQK) are compositionally biased toward low complexity. The span at 21–33 (MAQEQEKLKEERV) shows a compositional bias: basic and acidic residues.

Belongs to the YbaB/EbfC family. In terms of assembly, homodimer.

Its subcellular location is the cytoplasm. The protein localises to the nucleoid. Binds to DNA and alters its conformation. May be involved in regulation of gene expression, nucleoid organization and DNA protection. This chain is Nucleoid-associated protein SE_2306, found in Staphylococcus epidermidis (strain ATCC 12228 / FDA PCI 1200).